Here is a 325-residue protein sequence, read N- to C-terminus: MSWITPDLIEILLSILKAVVILLVVVTCGAFMSFGERRLLGLFQNRYGPNRVGWGGSLQLVADMIKMFFKEDWVPKFSDRVIFTLAPMIAFTSLLLSFAIVPVSPNWVVADLNIGILFFLMMAGLAVYAVLFAGWSSNNKYSLLGAMRASAQTVSYEVFLGLSLMGVVAQAGSFNMTDIVNNQAHLWNVIPQFFGFVTFAIAGVAVCHRHPFDQPEAEQELADGYHIEYSGMKFGLFFVGEYIGIVTVSALMVTLFFGGWHGPFLPPFVWFALKTAFFMMMFILIRASLPRPRYDQVMSFGWKVCLPLTLINLLVTAAVILWQAQ.

Helical transmembrane passes span 11–31, 50–69, 81–101, 114–134, 154–174, 186–206, 237–257, 265–285, and 304–324; these read ILLSILKAVVILLVVVTCGAF, NRVGWGGSLQLVADMIKMFF, VIFTLAPMIAFTSLLLSFAIV, IGILFFLMMAGLAVYAVLFAG, VSYEVFLGLSLMGVVAQAGSF, LWNVIPQFFGFVTFAIAGVAV, FFVGEYIGIVTVSALMVTLFF, LPPFVWFALKTAFFMMMFILI, and VCLPLTLINLLVTAAVILWQA.

This sequence belongs to the complex I subunit 1 family. NDH-1 is composed of 13 different subunits. Subunits NuoA, H, J, K, L, M, N constitute the membrane sector of the complex.

The protein resides in the cell inner membrane. It carries out the reaction a quinone + NADH + 5 H(+)(in) = a quinol + NAD(+) + 4 H(+)(out). In terms of biological role, NDH-1 shuttles electrons from NADH, via FMN and iron-sulfur (Fe-S) centers, to quinones in the respiratory chain. The immediate electron acceptor for the enzyme in this species is believed to be ubiquinone. Couples the redox reaction to proton translocation (for every two electrons transferred, four hydrogen ions are translocated across the cytoplasmic membrane), and thus conserves the redox energy in a proton gradient. This subunit may bind ubiquinone. This chain is NADH-quinone oxidoreductase subunit H, found in Salmonella arizonae (strain ATCC BAA-731 / CDC346-86 / RSK2980).